Reading from the N-terminus, the 332-residue chain is tRNA dimethylallyltransferase (332 aa).

17–24 contributes to the ATP binding site; it reads GPTCSGKS. 19-24 is a substrate binding site; that stretch reads TCSGKS. Interaction with substrate tRNA regions lie at residues 42-45 and 166-170; these read DSMQ and QRVAR.

Belongs to the IPP transferase family. As to quaternary structure, monomer. The cofactor is Mg(2+).

The enzyme catalyses adenosine(37) in tRNA + dimethylallyl diphosphate = N(6)-dimethylallyladenosine(37) in tRNA + diphosphate. In terms of biological role, catalyzes the transfer of a dimethylallyl group onto the adenine at position 37 in tRNAs that read codons beginning with uridine, leading to the formation of N6-(dimethylallyl)adenosine (i(6)A). This chain is tRNA dimethylallyltransferase, found in Gluconacetobacter diazotrophicus (strain ATCC 49037 / DSM 5601 / CCUG 37298 / CIP 103539 / LMG 7603 / PAl5).